The chain runs to 287 residues: Serine/arginine-rich SC35-like splicing factor SCL33 (287 aa).

The disordered stretch occupies residues 1-34; that stretch reads MRGRSYTPSPPRGYGRRGRSPSPRGRYGGRSRDL. A phosphoserine mark is found at serine 9 and serine 20. An RRM domain is found at 36 to 114; the sequence is TSLLVRNLRH…RELTVVFAEE (79 aa). Over residues 116–132 the composition is skewed to basic and acidic residues; the sequence is RKKPTEMRARERGGGRF. Residues 116-287 form a disordered region; the sequence is RKKPTEMRAR…QYDEDRSPSQ (172 aa). Phosphoserine occurs at positions 165, 175, 177, 188, and 190. Over residues 177–187 the composition is skewed to basic and acidic residues; that stretch reads SPREERYDGRR. Basic residues predominate over residues 220-237; that stretch reads SISRSPRRSRSPSPKRNR. Residues serine 238, serine 248, serine 271, serine 284, and serine 286 each carry the phosphoserine modification. A compositionally biased stretch (basic residues) spans 244 to 260; it reads SISRSPRRSRSPRRSRR. Positions 278–287 are enriched in basic and acidic residues; that stretch reads QYDEDRSPSQ.

The protein belongs to the splicing factor SR family. SCL subfamily. As to quaternary structure, component of the spliceosome. Homodimer. Interacts with AFC2, CYP59, RS2Z33, RNU1 and SR45. The interaction with AFC2 depends on phosphorylation status. In terms of processing, phosphorylated by AFC2. As to expression, ubiquitous. Mostly expressed in roots, fruits and flowers, and, to a lower extent, in leaves.

It is found in the nucleus speckle. It localises to the nucleus. The protein resides in the nucleoplasm. Its subcellular location is the cytoplasm. Involved in intron recognition and spliceosome assembly. Binds to multiple 5'-GAAG-3' repeats found in its third intron, suggesting autoregulation of alternative splicing. May be necessary for accurate splicing of the 3' region of introns. The chain is Serine/arginine-rich SC35-like splicing factor SCL33 (SCL33) from Arabidopsis thaliana (Mouse-ear cress).